Consider the following 343-residue polypeptide: Heat-inducible transcription repressor HrcA (343 aa).

The protein belongs to the HrcA family.

Negative regulator of class I heat shock genes (grpE-dnaK-dnaJ and groELS operons). Prevents heat-shock induction of these operons. The sequence is that of Heat-inducible transcription repressor HrcA from Clostridium botulinum (strain Eklund 17B / Type B).